Reading from the N-terminus, the 447-residue chain is GTPase Der (447 aa).

EngA-type G domains are found at residues 3-167 (PVVA…HLED) and 180-353 (IKLA…KAAN). GTP-binding positions include 9–16 (GRPNVGKS), 56–60 (DTGGF), 119–122 (NKAE), 186–193 (GRPNVGKS), 233–237 (DTAGL), and 298–301 (NKWD). Residues 354 to 438 (CKMSTPILTR…PMRIEFKSST (85 aa)) enclose the KH-like domain.

This sequence belongs to the TRAFAC class TrmE-Era-EngA-EngB-Septin-like GTPase superfamily. EngA (Der) GTPase family. Associates with the 50S ribosomal subunit.

GTPase that plays an essential role in the late steps of ribosome biogenesis. This chain is GTPase Der, found in Albidiferax ferrireducens (strain ATCC BAA-621 / DSM 15236 / T118) (Rhodoferax ferrireducens).